A 294-amino-acid chain; its full sequence is uncharacterized protein (294 aa).

Residues 5–25 form a helical membrane-spanning segment; that stretch reads ILIILIIIIIVIISLIYLKNF. 4 N-linked (GlcNAc...) asparagine; by host glycosylation sites follow: Asn151, Asn170, Asn205, and Asn271.

Its subcellular location is the membrane. This is an uncharacterized protein from Acanthamoeba polyphaga (Amoeba).